A 205-amino-acid chain; its full sequence is Putative C-type lectin protein FPV001/FPV260 (205 aa).

A C-type lectin domain is found at 84–187 (CPRDWISHNG…CSVRRYLVCK (104 aa)).

The sequence is that of Putative C-type lectin protein FPV001/FPV260 from Fowlpox virus (strain NVSL) (FPV).